The following is a 506-amino-acid chain: Sodium transporter HKT1 (506 aa).

Residues 1 to 19 (MDRVVAKIAKIRSQLTKLR) lie on the Cytoplasmic side of the membrane. A helical membrane pass occupies residues 20 to 40 (SLFFLYFIYFLFFSFLGFLAL). Over 41 to 81 (KITKPRTTSRPHDFDLFFTSVSAITVSSMSTVDMEVFSNTQ) the chain is Extracellular. Residues 82–102 (LIFLTILMFLGGEIFTSFLNL) form a helical membrane-spanning segment. The Cytoplasmic segment spans residues 103–159 (YVSYFTKFVFPHNKIRHILGSYNSDSSIEDRCDVETVTDYREGLIKIDERASKCLYS). Residues 160-180 (VVLSYHLVTNLVGSVLLLVYV) traverse the membrane as a helical segment. Topologically, residues 181 to 232 (NFVKTARDVLSSKEISPLTFSVFTTVSTFANCGFVPTNENMIIFRKNSGLIW) are extracellular. The helical transmembrane segment at 233–253 (LLIPQVLMGNTLFPCFLVLLI) threads the bilayer. The Cytoplasmic segment spans residues 254-286 (WGLYKITKRDEYGYILKNHNKMGYSHLLSVRLC). The helical transmembrane segment at 287 to 307 (VLLGVTVLGFLIIQLLFFCAF) threads the bilayer. Over 308–348 (EWTSESLEGMSSYEKLVGSLFQVVNSRHTGETIVDLSTLSP) the chain is Extracellular. The chain crosses the membrane as a helical span at residues 349-369 (AILVLFILMMYLPPYTLFMPL). At 370 to 392 (TEQKTIEKEGGDDDSENGKKVKK) the chain is on the cytoplasmic side. A helical membrane pass occupies residues 393–413 (SGLIVSQLSFLTICIFLISIT). At 414-465 (ERQNLQRDPINFNVLNITLEVISAYGNVGFTTGYSCERRVDISDGGCKDASY) the chain is on the extracellular side. An N-linked (GlcNAc...) asparagine glycan is attached at N429. Residues 466–486 (GFAGRWSPMGKFVLIIVMFYG) form a helical membrane-spanning segment. The Cytoplasmic segment spans residues 487–506 (RFKQFTAKSGRAWILYPSSS).

Belongs to the TrkH potassium transport family. HKT (TC 2.A.38.3) subfamily. N-glycosylated. Not essential for functional expression and membrane targeting. In terms of tissue distribution, highly expressed in roots. Expressed in flowers, leaves and stems. Expressed in the vascular tissues of every organs. In roots, leaves and flower peduncles, it is only expressed in the phloem tissues. Not expressed in root peripheral cells.

Its subcellular location is the cell membrane. It catalyses the reaction Na(+)(in) = Na(+)(out). Functionally, sodium transporter protein, which plays a central role in plant tolerance to salt. Upon prolongated exposure to high concentrations, Na(+) translocates from the roots to the transpiring leaves where it can increase to toxic level. Involved in Na(+) recirculation from shoots to roots, probably by mediating Na(+) loading into the phloem sap in shoots and unloading in roots, thereby removing large amounts of Na(+) from the shoot. Does not transport K(+) but regulates K(+) nutrient status via its ability to facilitate Na(+) homeostasis. Probably not involved in root uptake of Na(+). The sequence is that of Sodium transporter HKT1 (HKT1) from Arabidopsis thaliana (Mouse-ear cress).